We begin with the raw amino-acid sequence, 808 residues long: Na(+)/H(+) antiporter 2 (808 aa).

A run of 9 helical transmembrane segments spans residues His12–Val32, Leu36–Leu56, Ile70–Leu90, Leu105–Val125, Leu128–Ala148, Cys174–Gly194, Trp203–Gly223, Phe244–Val264, and Leu267–Thr287. The N-linked (GlcNAc...) asparagine glycan is linked to Asn291. The next 5 membrane-spanning stretches (helical) occupy residues Asn294–Trp314, Asn319–Leu339, Ala361–Ser381, Val409–Gly429, and Val432–Gly452. Disordered regions lie at residues Gln478 to Val499 and His541 to Ala562. Over residues Ala542–Arg561 the composition is skewed to polar residues. Residues Asn545 and Asn602 are each glycosylated (N-linked (GlcNAc...) asparagine). Residues Leu774–Asp808 are disordered. Positions Glu779–Asp797 are enriched in acidic residues.

It belongs to the fungal Na(+)/H(+) exchanger family.

It localises to the membrane. Sodium export from cell, takes up external protons in exchange for internal sodium ions. Seems to be poorly expressed. The chain is Na(+)/H(+) antiporter 2 (SOD22) from Zygosaccharomyces rouxii.